A 199-amino-acid chain; its full sequence is 5'-deoxynucleotidase YfbR (199 aa).

Substrate is bound by residues 18 to 19 and His33; that span reads RW. Positions 30 to 142 constitute an HD domain; it reads VSEHSLQVAM…VKQADALCAY (113 aa). Residues His33, His68, and Asp69 each coordinate a divalent metal cation. Residues Asp69, 77–80, and Asp137 contribute to the substrate site; that span reads DLPT. Asp137 provides a ligand contact to a divalent metal cation.

It belongs to the 5DNU family. In terms of assembly, homodimer. It depends on a divalent metal cation as a cofactor.

The protein resides in the cytoplasm. It carries out the reaction a 2'-deoxyribonucleoside 5'-phosphate + H2O = a 2'-deoxyribonucleoside + phosphate. Its function is as follows. Catalyzes the strictly specific dephosphorylation of 2'-deoxyribonucleoside 5'-monophosphates. The polypeptide is 5'-deoxynucleotidase YfbR (Shigella boydii serotype 18 (strain CDC 3083-94 / BS512)).